A 496-amino-acid polypeptide reads, in one-letter code: Cruciferin BnC2 (496 aa).

An N-terminal signal peptide occupies residues 1–23 (MARLSSLLYFSITVLIFLHGSTA). 2 disulfides stabilise this stretch: C30-C63 and C106-C313. Cupin type-1 domains are found at residues 35 to 269 (LNAL…RTAQ) and 319 to 468 (DNLD…EEAR). T109 carries the phosphothreonine modification. The segment at 114–170 (SVFQPGSGSPFGEGQGQGQQGQGQGQGQGQGKGQQGQGKGQQGQSQGQQGQGQGFRD) is disordered. Positions 122-154 (SPFGEGQGQGQQGQGQGQGQGQGKGQQGQGKGQ) are enriched in gly residues. Phosphotyrosine is present on Y336. Residue S338 is modified to Phosphoserine. At T432 the chain carries Phosphothreonine.

Belongs to the 11S seed storage protein (globulins) family. Hexamer; each subunit is composed of an acidic and a basic chain derived from a single precursor and linked by a disulfide bond.

In terms of biological role, this is a seed storage protein. This Brassica napus (Rape) protein is Cruciferin BnC2 (BnC2).